Here is a 188-residue protein sequence, read N- to C-terminus: Peptidyl-tRNA hydrolase (188 aa).

Tyrosine 16 contributes to the tRNA binding site. Histidine 21 acts as the Proton acceptor in catalysis. TRNA-binding residues include phenylalanine 66, asparagine 68, and asparagine 114.

The protein belongs to the PTH family. In terms of assembly, monomer.

The protein localises to the cytoplasm. It catalyses the reaction an N-acyl-L-alpha-aminoacyl-tRNA + H2O = an N-acyl-L-amino acid + a tRNA + H(+). Hydrolyzes ribosome-free peptidyl-tRNAs (with 1 or more amino acids incorporated), which drop off the ribosome during protein synthesis, or as a result of ribosome stalling. Functionally, catalyzes the release of premature peptidyl moieties from peptidyl-tRNA molecules trapped in stalled 50S ribosomal subunits, and thus maintains levels of free tRNAs and 50S ribosomes. The chain is Peptidyl-tRNA hydrolase from Citrifermentans bemidjiense (strain ATCC BAA-1014 / DSM 16622 / JCM 12645 / Bem) (Geobacter bemidjiensis).